Here is a 216-residue protein sequence, read N- to C-terminus: DNA replication complex GINS protein PSF3 (216 aa).

Residues 1–16 (MSEAYFRVESGALGPE) are not essential for folding and stability of GINS complex, but may regulate accessibility to the central complex pore.

It belongs to the GINS3/PSF3 family. As to quaternary structure, component of the GINS complex which is a heterotetramer of GINS1, GINS2, GINS3 and GINS4. Forms a stable subcomplex with GINS2. GINS complex interacts with DNA primase in vitro. Component of the CMG helicase complex, a hexameric ring of related MCM2-7 subunits stabilized by CDC45 and the tetrameric GINS complex.

It localises to the nucleus. Its subcellular location is the chromosome. Required for correct functioning of the GINS complex, a complex that plays an essential role in the initiation of DNA replication, and progression of DNA replication forks. GINS complex is a core component of CDC45-MCM-GINS (CMG) helicase, the molecular machine that unwinds template DNA during replication, and around which the replisome is built. This chain is DNA replication complex GINS protein PSF3 (GINS3), found in Bos taurus (Bovine).